A 58-amino-acid chain; its full sequence is Large ribosomal subunit protein uL30 (58 aa).

This sequence belongs to the universal ribosomal protein uL30 family. As to quaternary structure, part of the 50S ribosomal subunit.

This Pseudomonas putida (strain ATCC 700007 / DSM 6899 / JCM 31910 / BCRC 17059 / LMG 24140 / F1) protein is Large ribosomal subunit protein uL30.